The sequence spans 623 residues: tRNA 5-methylaminomethyl-2-thiouridine biosynthesis bifunctional protein MnmC (623 aa).

The tract at residues 1-244 (MCVSSSIQTA…KREMLKAIWP (244 aa)) is tRNA (mnm(5)s(2)U34)-methyltransferase. Residues 268 to 623 (IGAGIAGLHC…VKIKKPYYSS (356 aa)) are FAD-dependent cmnm(5)s(2)U34 oxidoreductase.

The protein in the N-terminal section; belongs to the methyltransferase superfamily. tRNA (mnm(5)s(2)U34)-methyltransferase family. It in the C-terminal section; belongs to the DAO family. The cofactor is FAD.

The protein resides in the cytoplasm. It carries out the reaction 5-aminomethyl-2-thiouridine(34) in tRNA + S-adenosyl-L-methionine = 5-methylaminomethyl-2-thiouridine(34) in tRNA + S-adenosyl-L-homocysteine + H(+). In terms of biological role, catalyzes the last two steps in the biosynthesis of 5-methylaminomethyl-2-thiouridine (mnm(5)s(2)U) at the wobble position (U34) in tRNA. Catalyzes the FAD-dependent demodification of cmnm(5)s(2)U34 to nm(5)s(2)U34, followed by the transfer of a methyl group from S-adenosyl-L-methionine to nm(5)s(2)U34, to form mnm(5)s(2)U34. The polypeptide is tRNA 5-methylaminomethyl-2-thiouridine biosynthesis bifunctional protein MnmC (Acinetobacter baylyi (strain ATCC 33305 / BD413 / ADP1)).